Here is a 156-residue protein sequence, read N- to C-terminus: Transcriptional repressor NrdR (156 aa).

A zinc finger lies at 3–34 (CPFCGSMDTRVLDSRPTLDGAAIRRRRECISC). In terms of domain architecture, ATP-cone spans 49 to 139 (VLVIKKDGRR…VYRDFREVDQ (91 aa)).

The protein belongs to the NrdR family. The cofactor is Zn(2+).

Negatively regulates transcription of bacterial ribonucleotide reductase nrd genes and operons by binding to NrdR-boxes. In Thermotoga neapolitana (strain ATCC 49049 / DSM 4359 / NBRC 107923 / NS-E), this protein is Transcriptional repressor NrdR.